A 441-amino-acid chain; its full sequence is tRNA-2-methylthio-N(6)-dimethylallyladenosine synthase (441 aa).

Positions 2–117 constitute an MTTase N-terminal domain; the sequence is KGLYIKSYGC…LPELLVKAHR (116 aa). Residues C11, C47, C80, C157, C161, and C164 each coordinate [4Fe-4S] cluster. Residues 143–374 form the Radical SAM core domain; it reads KNQETSAFIS…QKLLREQQLA (232 aa).

Belongs to the methylthiotransferase family. MiaB subfamily. In terms of assembly, monomer. The cofactor is [4Fe-4S] cluster.

It is found in the cytoplasm. It carries out the reaction N(6)-dimethylallyladenosine(37) in tRNA + (sulfur carrier)-SH + AH2 + 2 S-adenosyl-L-methionine = 2-methylsulfanyl-N(6)-dimethylallyladenosine(37) in tRNA + (sulfur carrier)-H + 5'-deoxyadenosine + L-methionine + A + S-adenosyl-L-homocysteine + 2 H(+). Catalyzes the methylthiolation of N6-(dimethylallyl)adenosine (i(6)A), leading to the formation of 2-methylthio-N6-(dimethylallyl)adenosine (ms(2)i(6)A) at position 37 in tRNAs that read codons beginning with uridine. The protein is tRNA-2-methylthio-N(6)-dimethylallyladenosine synthase of Ehrlichia canis (strain Jake).